We begin with the raw amino-acid sequence, 585 residues long: Organic cation transporter 1 (585 aa).

Over 1 to 40 (MSFQAMETFAEISQEILMSATKPPDFDFVLEQVGNYGTYQ) the chain is Cytoplasmic. A helical transmembrane segment spans residues 41 to 61 (IVFFFIICLPTSLPSAFSAFN). At 62-155 (IPFVVGNPPH…LVCDQQAWIE (94 aa)) the chain is on the extracellular side. Asparagine 87, asparagine 98, and asparagine 133 each carry an N-linked (GlcNAc...) asparagine glycan. Residues 156-176 (ISTTSFYVGSFIGNCLFGYVA) form a helical membrane-spanning segment. Topologically, residues 177-184 (DKFGRRRS) are cytoplasmic. A helical membrane pass occupies residues 185-205 (FFVILTVLIVCGTASSFAKDI). Residues 206–212 (ESFIILR) lie on the Extracellular side of the membrane. Residues 213 to 233 (FFTGLAFPALFQIPFIICMEF) traverse the membrane as a helical segment. The Cytoplasmic segment spans residues 234–243 (MGNSGRIFSG). A helical transmembrane segment spans residues 244-264 (LMTSLFFGAAMALLGVVAMFI). Over 265–269 (RRWRQ) the chain is Extracellular. Residues 270–290 (LTFFCNAPFAFYIIYYFFLPE) traverse the membrane as a helical segment. The Cytoplasmic portion of the chain corresponds to 291–360 (SPRWSVSVGK…FKTPNLRRKT (70 aa)). A helical membrane pass occupies residues 361-381 (LIVTYIWVMNAIIYNGLTLNV). Topologically, residues 382–389 (SNLPVDDY) are extracellular. The helical transmembrane segment at 390 to 410 (WSFIINGAVELPGYFVVWPLL) threads the bilayer. Topologically, residues 411-416 (QCAGRR) are cytoplasmic. The chain crosses the membrane as a helical span at residues 417–437 (WTLAATMIVCGIGCVSAMFMP). The Extracellular segment spans residues 438 to 446 (DGYPWLVAS). The helical transmembrane segment at 447–467 (ASFIGKFGVGSGFAVIYIFAG) threads the bilayer. The Cytoplasmic portion of the chain corresponds to 468–476 (ELYPTVVRA). A helical transmembrane segment spans residues 477–497 (IGMGMSSMVAGSGLLLAPHIV). Over 498-504 (NLGKIVK) the chain is Extracellular. Residues 505–525 (ILPLLIMGLMALSAGILTFFL) traverse the membrane as a helical segment. Over 526–585 (PETLGAPLPMTIEDAENFGKKPEPDSGMFTQAAKKRESQPLLEPHTPMDRRRRSSRLMNI) the chain is Cytoplasmic. The disordered stretch occupies residues 544-585 (GKKPEPDSGMFTQAAKKRESQPLLEPHTPMDRRRRSSRLMNI). The segment covering 575 to 585 (RRRRSSRLMNI) has biased composition (basic residues).

Belongs to the major facilitator (TC 2.A.1) superfamily. Organic cation transporter (TC 2.A.1.19) family.

It localises to the membrane. Its function is as follows. Transports organic cations such as tetraethylammonium (TEA). Displays a broad substrate specificity. The polypeptide is Organic cation transporter 1 (oct-1) (Caenorhabditis elegans).